The following is a 448-amino-acid chain: CCA-adding enzyme (448 aa).

Positions 52 and 55 each coordinate ATP. CTP-binding residues include serine 52 and lysine 55. Residues aspartate 64, aspartate 66, and aspartate 118 each contribute to the Mg(2+) site. The ATP site is built by histidine 141, lysine 160, and tyrosine 169. Positions 141, 160, and 169 each coordinate CTP.

Belongs to the tRNA nucleotidyltransferase/poly(A) polymerase family. Archaeal CCA-adding enzyme subfamily. In terms of assembly, homodimer. It depends on Mg(2+) as a cofactor.

The catalysed reaction is a tRNA precursor + 2 CTP + ATP = a tRNA with a 3' CCA end + 3 diphosphate. It catalyses the reaction a tRNA with a 3' CCA end + 2 CTP + ATP = a tRNA with a 3' CCACCA end + 3 diphosphate. In terms of biological role, catalyzes the addition and repair of the essential 3'-terminal CCA sequence in tRNAs without using a nucleic acid template. Adds these three nucleotides in the order of C, C, and A to the tRNA nucleotide-73, using CTP and ATP as substrates and producing inorganic pyrophosphate. tRNA 3'-terminal CCA addition is required both for tRNA processing and repair. Also involved in tRNA surveillance by mediating tandem CCA addition to generate a CCACCA at the 3' terminus of unstable tRNAs. While stable tRNAs receive only 3'-terminal CCA, unstable tRNAs are marked with CCACCA and rapidly degraded. In Pyrococcus abyssi (strain GE5 / Orsay), this protein is CCA-adding enzyme.